A 351-amino-acid polypeptide reads, in one-letter code: Transmembrane protein 115 (351 aa).

The Cytoplasmic portion of the chain corresponds to 1–19 (MQRALPGARQHLGAILSSA). Positions 1 to 205 (MQRALPGARQ…FGLISSWVYL (205 aa)) are mediates homooligomerization. Residues 20-40 (SVVVKALCAAVLFLYLLSFAV) form a helical membrane-spanning segment. Residues 41–97 (DTGCLAVTPGYLFPPNFWIWTLATHGLMEQHVWDVAISLATVVVAGRLLEPLWGALE) are Lumenal-facing. Residues 98 to 118 (LLIFFSVVNVSVGLLGAFAYL) traverse the membrane as a helical segment. Residues 119-126 (LTYMASFN) are Cytoplasmic-facing. A helical membrane pass occupies residues 127-147 (LVYLFTVRIHGALGFLGGVLV). The Lumenal portion of the chain corresponds to 148-165 (ALKQTMGDCVVLRVPQVR). Residues 166-186 (VSVVPMLLLGLLLLLRLATLL) traverse the membrane as a helical segment. Topologically, residues 187-351 (QSPALASYGF…ITFEAAPPTL (165 aa)) are cytoplasmic. The segment at 206-229 (RFYQRHSRGRGDMADHFAFATFFP) is mediates localization to the Golgi. The segment at 300 to 351 (DQSVWPSMDDDEEEAGAKVDSPMPSDKAPTLPGKGAVPESSLITFEAAPPTL) is disordered. Position 329 is a phosphothreonine (T329).

Belongs to the TMEM115 family. As to quaternary structure, homooligomer. Interacts with COPB1. May interact with LMAN1. Interacts with the COG complex; probably through COG3.

It localises to the golgi apparatus. The protein resides in the golgi stack membrane. In terms of biological role, may play a role in retrograde transport of proteins from the Golgi to the endoplasmic reticulum. May indirectly play a role in protein glycosylation in the Golgi. This Bos taurus (Bovine) protein is Transmembrane protein 115.